The following is a 94-amino-acid chain: Large ribosomal subunit protein uL23 (94 aa).

This sequence belongs to the universal ribosomal protein uL23 family. In terms of assembly, part of the 50S ribosomal subunit. Contacts protein L29, and trigger factor when it is bound to the ribosome.

Functionally, one of the early assembly proteins it binds 23S rRNA. One of the proteins that surrounds the polypeptide exit tunnel on the outside of the ribosome. Forms the main docking site for trigger factor binding to the ribosome. The chain is Large ribosomal subunit protein uL23 from Listeria innocua serovar 6a (strain ATCC BAA-680 / CLIP 11262).